The following is a 310-amino-acid chain: tRNA dimethylallyltransferase (310 aa).

ATP is bound at residue 19–26 (GPTGTGKS). 21–26 (TGTGKS) is a substrate binding site.

Belongs to the IPP transferase family. In terms of assembly, monomer. Requires Mg(2+) as cofactor.

It carries out the reaction adenosine(37) in tRNA + dimethylallyl diphosphate = N(6)-dimethylallyladenosine(37) in tRNA + diphosphate. Catalyzes the transfer of a dimethylallyl group onto the adenine at position 37 in tRNAs that read codons beginning with uridine, leading to the formation of N6-(dimethylallyl)adenosine (i(6)A). The protein is tRNA dimethylallyltransferase of Saccharopolyspora erythraea (strain ATCC 11635 / DSM 40517 / JCM 4748 / NBRC 13426 / NCIMB 8594 / NRRL 2338).